Reading from the N-terminus, the 754-residue chain is Photosystem I P700 chlorophyll a apoprotein A1 (754 aa).

The next 8 helical transmembrane spans lie at 72-95 (IFSA…FHGA), 158-181 (LYCT…FHYH), 197-221 (MNHH…HVSL), 293-311 (TAHH…GHMY), 351-374 (WHAQ…HHMY), 390-416 (LSLF…IFMV), 438-460 (AIIS…LYIH), and 535-553 (FMVH…LILL). The [4Fe-4S] cluster site is built by Cys-577 and Cys-586. Helical transmembrane passes span 593–614 (HVFL…HFSW) and 668–690 (LSAY…MFLF). His-679 lines the chlorophyll a' pocket. Residues Met-687 and Tyr-695 each coordinate chlorophyll a. Trp-696 is a binding site for phylloquinone. The helical transmembrane segment at 728 to 748 (AVGVAHYLLGGIVTTWAFFLA) threads the bilayer.

Belongs to the PsaA/PsaB family. The PsaA/B heterodimer binds the P700 chlorophyll special pair and subsequent electron acceptors. PSI consists of a core antenna complex that captures photons, and an electron transfer chain that converts photonic excitation into a charge separation. The cyanobacterial PSI reaction center is composed of one copy each of PsaA,B,C,D,E,F,I,J,K,L,M and X, and forms trimeric complexes. It depends on PSI electron transfer chain: 5 chlorophyll a, 1 chlorophyll a', 2 phylloquinones and 3 4Fe-4S clusters. PSI core antenna: 90 chlorophyll a, 22 carotenoids, 3 phospholipids and 1 galactolipid. P700 is a chlorophyll a/chlorophyll a' dimer, A0 is one or more chlorophyll a, A1 is one or both phylloquinones and FX is a shared 4Fe-4S iron-sulfur center. as a cofactor.

The protein resides in the cellular thylakoid membrane. It carries out the reaction reduced [plastocyanin] + hnu + oxidized [2Fe-2S]-[ferredoxin] = oxidized [plastocyanin] + reduced [2Fe-2S]-[ferredoxin]. In terms of biological role, psaA and PsaB bind P700, the primary electron donor of photosystem I (PSI), as well as the electron acceptors A0, A1 and FX. PSI is a plastocyanin/cytochrome c6-ferredoxin oxidoreductase, converting photonic excitation into a charge separation, which transfers an electron from the donor P700 chlorophyll pair to the spectroscopically characterized acceptors A0, A1, FX, FA and FB in turn. Oxidized P700 is reduced on the lumenal side of the thylakoid membrane by plastocyanin or cytochrome c6. This Rippkaea orientalis (strain PCC 8801 / RF-1) (Cyanothece sp. (strain PCC 8801)) protein is Photosystem I P700 chlorophyll a apoprotein A1.